The following is a 357-amino-acid chain: Protein-glutamate methylesterase/protein-glutamine glutaminase (357 aa).

Residues 3 to 120 form the Response regulatory domain; sequence RVIVVDDSAF…LASMDLAALS (118 aa). D54 carries the 4-aspartylphosphate modification. One can recognise a CheB-type methylesterase domain in the interval 165-357; it reads ERSRRDIIAI…AERVASALYK (193 aa). Active-site residues include S177, H204, and D300.

The protein belongs to the CheB family. In terms of processing, phosphorylated by CheA. Phosphorylation of the N-terminal regulatory domain activates the methylesterase activity.

It is found in the cytoplasm. The enzyme catalyses [protein]-L-glutamate 5-O-methyl ester + H2O = L-glutamyl-[protein] + methanol + H(+). It catalyses the reaction L-glutaminyl-[protein] + H2O = L-glutamyl-[protein] + NH4(+). In terms of biological role, involved in chemotaxis. Part of a chemotaxis signal transduction system that modulates chemotaxis in response to various stimuli. Catalyzes the demethylation of specific methylglutamate residues introduced into the chemoreceptors (methyl-accepting chemotaxis proteins or MCP) by CheR. Also mediates the irreversible deamidation of specific glutamine residues to glutamic acid. The chain is Protein-glutamate methylesterase/protein-glutamine glutaminase from Lawsonia intracellularis (strain PHE/MN1-00).